We begin with the raw amino-acid sequence, 260 residues long: 5'-nucleotidase SurE (260 aa).

The a divalent metal cation site is built by Asp8, Asp9, Ser39, and Asn96.

The protein belongs to the SurE nucleotidase family. It depends on a divalent metal cation as a cofactor.

The protein resides in the cytoplasm. The catalysed reaction is a ribonucleoside 5'-phosphate + H2O = a ribonucleoside + phosphate. Functionally, nucleotidase that shows phosphatase activity on nucleoside 5'-monophosphates. This is 5'-nucleotidase SurE from Moorella thermoacetica (strain ATCC 39073 / JCM 9320).